An 89-amino-acid chain; its full sequence is Large ribosomal subunit protein bL31B (89 aa).

A disordered region spans residues 70 to 89 (RVQRFESRRRRRQQQSGEQG).

The protein belongs to the bacterial ribosomal protein bL31 family. Type B subfamily. Part of the 50S ribosomal subunit.

This Rubrobacter xylanophilus (strain DSM 9941 / JCM 11954 / NBRC 16129 / PRD-1) protein is Large ribosomal subunit protein bL31B.